The sequence spans 2090 residues: Host cell factor 1 (2090 aa).

Ala2 is modified (N-acetylalanine). Ser6 is subject to Phosphoserine. 5 Kelch repeats span residues 44 to 89 (LIVV…GFVC), 93 to 140 (RLLV…RLGH), 148 to 194 (KCYL…ITYG), 217 to 265 (KLVI…TIGN), and 266 to 313 (KMYV…LMDT). Glycyl lysine isopeptide (Lys-Gly) (interchain with G-Cter in ubiquitin) cross-links involve residues Lys105, Lys163, and Lys244. Lys282 is covalently cross-linked (Glycyl lysine isopeptide (Lys-Gly) (interchain with G-Cter in SUMO2)). Lys288 is subject to N6-acetyllysine. Lys363 participates in a covalent cross-link: Glycyl lysine isopeptide (Lys-Gly) (interchain with G-Cter in ubiquitin). Residues 366–469 (PPARVQLVRA…TIQVLPTVPG (104 aa)) form the Fibronectin type-III 1 domain. Positions 407–434 (ATATSPTPNPVPSVPANPPKSPAPAAAA) are disordered. Phosphoserine is present on Ser411. Over residues 413 to 428 (TPNPVPSVPANPPKSP) the composition is skewed to pro residues. Residues 500 to 550 (LVTMRPAGQAGKAPVTVTSLPASVRMVVPTQSAQGTVIGSNPQMSGMAALA) are required for interaction with OGT. Residues Arg504 and Arg524 each carry the omega-N-methylarginine modification. Ser598, Ser666, and Ser669 each carry phosphoserine. Residues 610-722 (LKTAAAQVGT…KGPLPAGTIL (113 aa)) are interaction with SIN3A. The tract at residues 750 to 902 (ILGISSVSPS…SLAGAGAHST (153 aa)) is interaction with ZBTB17. Residue Lys813 is modified to N6-acetyllysine. An interaction with GABP2 region spans residues 813–912 (KIITAVPKIA…SASLATPITT (100 aa)). 3 HCF repeat repeats span residues 1010 to 1035 (TLVC…TVVA), 1072 to 1097 (VRVC…ATSN), and 1101 to 1126 (QHGC…AMSS). The tract at residues 1098-1140 (MAGQHGCSNPPCETHETGTTSTATTAMSSMGTGQQRDTRHTSS) is disordered. Residues 1114–1130 (TGTTSTATTAMSSMGTG) show a composition bias toward low complexity. Residues 1157–1182 (TQGTVKPQCQTQQANMTNTTMTVQAT) form an HCF repeat 4; degenerate repeat. Ser1204 carries the phosphoserine modification. Arg1216 is modified (asymmetric dimethylarginine). Ser1223 carries the post-translational modification Phosphoserine. HCF repeat repeat units lie at residues 1295–1320 (TQVC…SNAG) and 1323–1348 (QRVC…ATSN). Disordered stretches follow at residues 1302 to 1374 (PCET…TTST) and 1444 to 1486 (TVTS…TTVS). A compositionally biased stretch (low complexity) spans 1308–1321 (TGTTNTATTSNAGS). An HCF repeat 7; degenerate repeat occupies 1358-1383 (QQPAGGRPCETHQTTSTGTTMSVSVG). An HCF repeat 8 repeat occupies 1423 to 1448 (QRVCSNPPCETHETGTTHTATTVTSN). Positions 1465-1475 (VVSTQGDSANI) are enriched in polar residues. Residues 1476–1486 (TSSSGITTTVS) show a composition bias toward low complexity. A Phosphothreonine modification is found at Thr1500. A phosphoserine mark is found at Ser1506, Ser1559, and Ser1826. Fibronectin type-III domains follow at residues 1853 to 1943 (PPPP…TCLP) and 1945 to 2061 (FPGA…TSKD). Residues Lys1862 and Lys1863 each participate in a glycyl lysine isopeptide (Lys-Gly) (interchain with G-Cter in ubiquitin) cross-link. Ser1893 bears the Phosphoserine mark. Positions 2049–2090 (ATQVRWLQETSKDSSGTKPASKRPMSSPEMKSAPKKSKADGQ) are disordered. Position 2060 is an N6-acetyllysine (Lys2060). Lys2079 is covalently cross-linked (Glycyl lysine isopeptide (Lys-Gly) (interchain with G-Cter in SUMO2)).

Composed predominantly of six polypeptides ranging from 110 to 150 kDa and a minor 300 kDa polypeptide. The majority of N- and C-terminal cleavage products remain tightly, albeit non-covalently, associated. Interacts with POU2F1, CREB3, ZBTB17, EGR2, E2F4, CREBZF, SP1, GABP2, Sin3 HDAC complex (SIN3A, HDAC1, HDAC2, SUDS3), SAP30, SIN3B and FHL2. Component of a MLL1 complex, composed of at least the core components KMT2A/MLL1, ASH2L, HCFC1, WDR5 and RBBP5, as well as the facultative components BACC1, CHD8, DPY30, E2F6, HCFC2, HSP70, INO80C, KANSL1, LAS1L, MAX, MCRS1, MEN1, MGA, KAT8, PELP1, PHF20, PRP31, RING2, RUVBL1, RUVBL2, SENP3, TAF1, TAF4, TAF6, TAF7, TAF9 and TEX10. Component of a THAP1/THAP3-HCFC1-OGT complex that is required for the regulation of the transcriptional activity of RRM1. Interacts directly with THAP3 (via its HBM). Interacts (via the Kelch-repeat domain) with THAP1 (via the HBM); the interaction recruits HCHC1 to the RRM1. Interacts directly with OGT; the interaction, which requires the HCFC1 cleavage site domain, glycosylates and promotes the proteolytic processing of HCFC1 and retains OGT in the nucleus. Component of the SET1 complex, at least composed of the catalytic subunit (SETD1A or SETD1B), WDR5, WDR82, RBBP5, ASH2L, CXXC1, HCFC1 and DPY30. Component of the NSL complex at least composed of MOF/KAT8, KANSL1, KANSL2, KANSL3, MCRS1, PHF20, OGT1/OGT, WDR5 and HCFC1. Component of a complex at least composed of ZNF335, HCFC1, CCAR2, EMSY, MKI67, RBBP5, ASH2L and WDR5; the complex is formed as a result of interactions between components of a nuclear receptor-mediated transcription complex and a histone methylation complex. Within the complex interacts with ZNF335. Interacts with TET2 and TET3. Interacts with HCFC1R1. Interacts with THAP11. Interacts (via Kelch domain) with KMT2E (via HBM motif). Interacts with E2F1. Accessory scaffold component of the polycomb repressive deubiquitinase (PR-DUB) complex, at least composed of BAP1, one of ASXL1, ASXL2 or (probably) ASXL3 and one of MBD5 or MBD6; the PR-DUB core associates with a number of accessory proteins, including FOXK1, FOXK2, KDM1B, HCFC1, YY1 and OGT. Interacts with YY1 (via Gly-rich region); the interaction is direct. Interacts with BAP1 (via HBM-like motif). Proteolytically cleaved at one or several PPCE--THET sites within the HCF repeats. Cleavage is promoted by O-glycosylation. Further cleavage of the primary N- and C-terminal chains results in a 'trimming' and accumulation of the smaller chains. Cleavage is promoted by O-glycosylation. Post-translationally, O-glycosylated. GlcNAcylation by OGT promotes proteolytic processing. In terms of processing, ubiquitinated. Lys-1862 and Lys-1863 are ubiquitinated both via 'Lys-48'- and 'Lys-63'-linked polyubiquitin chains. BAP1 mediated deubiquitination of 'Lys-48'-linked polyubiquitin chains; deubiquitination by BAP1 does not seem to stabilize the protein.

Its subcellular location is the cytoplasm. The protein resides in the nucleus. Its function is as follows. Transcriptional coregulator. Serves as a scaffold protein, bridging interactions between transcription factors, including THAP11 and ZNF143, and transcriptional coregulators. Involved in control of the cell cycle. Also antagonizes transactivation by ZBTB17 and GABP2; represses ZBTB17 activation of the p15(INK4b) promoter and inhibits its ability to recruit p300. Coactivator for EGR2 and GABP2. Tethers the chromatin modifying Set1/Ash2 histone H3 'Lys-4' methyltransferase (H3K4me) and Sin3 histone deacetylase (HDAC) complexes (involved in the activation and repression of transcription respectively) together. As part of the NSL complex it may be involved in acetylation of nucleosomal histone H4 on several lysine residues. Recruits KMT2E to E2F1 responsive promoters promoting transcriptional activation and thereby facilitates G1 to S phase transition. Modulates expression of homeobox protein PDX1, perhaps acting in concert with transcription factor E2F1, thereby regulating pancreatic beta-cell growth and glucose-stimulated insulin secretion. May negatively modulate transcriptional activity of FOXO3. This chain is Host cell factor 1, found in Mesocricetus auratus (Golden hamster).